Reading from the N-terminus, the 345-residue chain is N-acetyl-gamma-glutamyl-phosphate reductase (345 aa).

The active site involves Cys-149.

The protein belongs to the NAGSA dehydrogenase family. Type 1 subfamily.

The protein resides in the cytoplasm. The enzyme catalyses N-acetyl-L-glutamate 5-semialdehyde + phosphate + NADP(+) = N-acetyl-L-glutamyl 5-phosphate + NADPH + H(+). It participates in amino-acid biosynthesis; L-arginine biosynthesis; N(2)-acetyl-L-ornithine from L-glutamate: step 3/4. Functionally, catalyzes the NADPH-dependent reduction of N-acetyl-5-glutamyl phosphate to yield N-acetyl-L-glutamate 5-semialdehyde. The chain is N-acetyl-gamma-glutamyl-phosphate reductase from Bacillus mycoides (strain KBAB4) (Bacillus weihenstephanensis).